Reading from the N-terminus, the 152-residue chain is Aspartate carbamoyltransferase regulatory chain (152 aa).

Residues cysteine 109, cysteine 114, cysteine 138, and cysteine 141 each coordinate Zn(2+).

Belongs to the PyrI family. In terms of assembly, contains catalytic and regulatory chains. The cofactor is Zn(2+).

In terms of biological role, involved in allosteric regulation of aspartate carbamoyltransferase. This is Aspartate carbamoyltransferase regulatory chain from Proteus mirabilis (strain HI4320).